Reading from the N-terminus, the 321-residue chain is Lipoyl synthase (321 aa).

Residues C68, C73, C79, C94, C98, C101, and S308 each contribute to the [4Fe-4S] cluster site. In terms of domain architecture, Radical SAM core spans 80–297 (FNHGTATFMI…KEQALAMGFT (218 aa)).

This sequence belongs to the radical SAM superfamily. Lipoyl synthase family. [4Fe-4S] cluster is required as a cofactor.

It localises to the cytoplasm. It catalyses the reaction [[Fe-S] cluster scaffold protein carrying a second [4Fe-4S](2+) cluster] + N(6)-octanoyl-L-lysyl-[protein] + 2 oxidized [2Fe-2S]-[ferredoxin] + 2 S-adenosyl-L-methionine + 4 H(+) = [[Fe-S] cluster scaffold protein] + N(6)-[(R)-dihydrolipoyl]-L-lysyl-[protein] + 4 Fe(3+) + 2 hydrogen sulfide + 2 5'-deoxyadenosine + 2 L-methionine + 2 reduced [2Fe-2S]-[ferredoxin]. It functions in the pathway protein modification; protein lipoylation via endogenous pathway; protein N(6)-(lipoyl)lysine from octanoyl-[acyl-carrier-protein]: step 2/2. Its function is as follows. Catalyzes the radical-mediated insertion of two sulfur atoms into the C-6 and C-8 positions of the octanoyl moiety bound to the lipoyl domains of lipoate-dependent enzymes, thereby converting the octanoylated domains into lipoylated derivatives. The protein is Lipoyl synthase of Proteus mirabilis (strain HI4320).